A 732-amino-acid chain; its full sequence is Catalase-peroxidase (732 aa).

The segment at residues 97–220 (WHSAGTYRTG…LAAVQMGLIY (124 aa)) is a cross-link (tryptophyl-tyrosyl-methioninium (Trp-Tyr) (with M-246)). His98 serves as the catalytic Proton acceptor. Residues 220–246 (YVNPEGPDGKPDPVAAGKDIRETFGRM) constitute a cross-link (tryptophyl-tyrosyl-methioninium (Tyr-Met) (with W-97)). His261 provides a ligand contact to heme b.

This sequence belongs to the peroxidase family. Peroxidase/catalase subfamily. Homodimer or homotetramer. Requires heme b as cofactor. In terms of processing, formation of the three residue Trp-Tyr-Met cross-link is important for the catalase, but not the peroxidase activity of the enzyme.

The enzyme catalyses H2O2 + AH2 = A + 2 H2O. It carries out the reaction 2 H2O2 = O2 + 2 H2O. Bifunctional enzyme with both catalase and broad-spectrum peroxidase activity. The protein is Catalase-peroxidase of Chlorobium phaeobacteroides (strain BS1).